We begin with the raw amino-acid sequence, 688 residues long: MATSSHQGAAAGSQMEHRLCETSIGQGERPRASRGQESNFKQSQGTSTLRLLLLGKQGAGKSATGNTILGKAVFESRFSHHMVTKRCQSESVSVRGKQVIVIDTPDLFSSLGCPEVQQQNLRQCLDLLADPYVLLLVTPIGHSTEEDKKTIEGIQGVFGPQAYRHMIVVFTREDELGEDTLQNHIESKKYLKKLIENIGSQRCCAFNNKADKKQQELQVSQFLDAIEFLMMESPGTYFEPLKTENSGVQGCGTGVTYKGDNLCGSKKRQPQITGPGWDRDTPELRVLLMGKRGVGKSAAGNSILGKQVFKTQFSEKQRVTEAFASHSRLWNQKKFLIIDSPEISSWKLDESDVKEHTFPGPHAFLLVTPLGSSLKSGDSVFSIIKRIFGEKFIKFTIILFTRKEDFEGQDLDTFTKENDALCNLIQIFEGRYAVFNYRATVEEEQSQVGKLLSQIESVVQHHNNKPCVIREKELLNIILLGRSGVGKSATGNTILGRPAFVSQLRAQPVTSRSQSGRRTLDWQDIVVVDTPSLNQMSGTEKNPAQLKKEIKQCLLQNCEEGMKVFVLVFQLGRFTQEDEAVVEQLEASFEENIMKYMIVLFTRKEDLGDGDLYDFTNNTKNKVLKRIFKKCKGRVCAFNNKETGEDQETQVKALLTIANDLKRSYDEHSTSWMDQLKSAVGQITTVFK.

The tract at residues Thr22 to Gln44 is disordered. The span at Gly35–Gln44 shows a compositional bias: polar residues. AIG1-type G domains lie at Thr46–Ser246, Thr281–Glu471, and Lys472–Gly681. Positions Gly55–Ser62 are G1. Residues Gly55 to Ala63 and Ser76 contribute to the GTP site. The tract at residues Met82–Arg86 is G2. Residues Asp103–Asp106 form a G3 region. The tract at residues Thr171–Asp174 is G4. GTP contacts are provided by residues Arg172–Asp174 and Asn208. A G5 region spans residues Asn207 to Lys209.

Belongs to the TRAFAC class TrmE-Era-EngA-EngB-Septin-like GTPase superfamily. AIG1/Toc34/Toc159-like paraseptin GTPase family. IAN subfamily. In terms of tissue distribution, spleen, thymus and T-cells. Greatly reduced in T-cells from lymphopenic rats.

The protein localises to the endoplasmic reticulum. It is found in the golgi apparatus. The protein resides in the mitochondrion. Its subcellular location is the cytoplasm. It localises to the cytosol. Its function is as follows. Exerts an anti-apoptotic effect in the immune system and is involved in responses to infections. In Rattus norvegicus (Rat), this protein is GTPase IMAP family member 8 (Gimap8).